The following is a 339-amino-acid chain: Dihydroorotate dehydrogenase (quinone) (339 aa).

FMN is bound by residues 62–66 (AGMDK) and Thr86. Lys66 is a binding site for substrate. Residue 111-115 (NRMGF) participates in substrate binding. FMN-binding residues include Asn139 and Asn172. Substrate is bound at residue Asn172. The Nucleophile role is filled by Ser175. Asn177 provides a ligand contact to substrate. Residues Lys217 and Thr245 each contribute to the FMN site. 246–247 (NT) contacts substrate. FMN contacts are provided by residues Gly268, Gly297, and 318–319 (FS).

The protein belongs to the dihydroorotate dehydrogenase family. Type 2 subfamily. In terms of assembly, monomer. FMN serves as cofactor.

The protein resides in the cell membrane. It catalyses the reaction (S)-dihydroorotate + a quinone = orotate + a quinol. It functions in the pathway pyrimidine metabolism; UMP biosynthesis via de novo pathway; orotate from (S)-dihydroorotate (quinone route): step 1/1. Its function is as follows. Catalyzes the conversion of dihydroorotate to orotate with quinone as electron acceptor. In Shewanella halifaxensis (strain HAW-EB4), this protein is Dihydroorotate dehydrogenase (quinone).